Here is a 360-residue protein sequence, read N- to C-terminus: MSEDQYKQIKLHLGMEDDNEDLPNHIPSSFPKQHLNKIYNGDTMNMLLDIPDNSVDLVVTSPPYNINKFKNDRRPLEEYLKWQTEIIEQCHRVLKPSGSIFWQVGTYVNDSGAHIPLDIRFFPIFESLGMFPRNRIVWVRPHGLHANKKFAGRHETILWFTKTPEYKFFLDPIRVPQKYANKKHYKGDKKGELSGDPLGKNPGDVWAFRNVRHNHEEDTIHPTQYPEDMIERIVLSTTEPNDIVLDPFIGMGTTASVAKNLNRYFYGAEIEKEYVDIAYQILSGEPDENNNFPNLKTLRQYCEKNGIIDPSQYTFTRQRKGSKPSLDSKAHPEEHHKKEIVERIEFEAENSVYKKVQNEQ.

Residues 316 to 341 (TRQRKGSKPSLDSKAHPEEHHKKEIV) are disordered. The span at 326–341 (LDSKAHPEEHHKKEIV) shows a compositional bias: basic and acidic residues.

The protein belongs to the N(4)/N(6)-methyltransferase family. N(4) subfamily.

It catalyses the reaction a 2'-deoxycytidine in DNA + S-adenosyl-L-methionine = an N(4)-methyl-2'-deoxycytidine in DNA + S-adenosyl-L-homocysteine + H(+). In terms of biological role, a beta subtype methylase, recognizes the double-stranded sequence 5'-AGATCT-3', methylates C-5 on both strands, and protects the DNA from cleavage by the BglII endonuclease. The polypeptide is Type II methyltransferase M.BglII (Bacillus subtilis).